The primary structure comprises 254 residues: Small ribosomal subunit protein uS3 (254 aa).

The KH type-2 domain maps to 39–109; that stretch reads IRNYISARLK…EVKIDVIEVI (71 aa). The tract at residues 220–254 is disordered; that stretch reads EEMKKMQERRNDSRGRGRGDGRGAKRRRRPAAKKA. Positions 221–242 are enriched in basic and acidic residues; the sequence is EMKKMQERRNDSRGRGRGDGRG. The segment covering 243 to 254 has biased composition (basic residues); it reads AKRRRRPAAKKA.

This sequence belongs to the universal ribosomal protein uS3 family. As to quaternary structure, part of the 30S ribosomal subunit. Forms a tight complex with proteins S10 and S14.

Binds the lower part of the 30S subunit head. Binds mRNA in the 70S ribosome, positioning it for translation. In Chlorobaculum parvum (strain DSM 263 / NCIMB 8327) (Chlorobium vibrioforme subsp. thiosulfatophilum), this protein is Small ribosomal subunit protein uS3.